We begin with the raw amino-acid sequence, 183 residues long: ATP synthase subunit b, chloroplastic (183 aa).

Residues 27–49 (LATNLINLTVVVGVLIFFGKGVL) traverse the membrane as a helical segment.

This sequence belongs to the ATPase B chain family. As to quaternary structure, F-type ATPases have 2 components, F(1) - the catalytic core - and F(0) - the membrane proton channel. F(1) has five subunits: alpha(3), beta(3), gamma(1), delta(1), epsilon(1). F(0) has four main subunits: a(1), b(1), b'(1) and c(10-14). The alpha and beta chains form an alternating ring which encloses part of the gamma chain. F(1) is attached to F(0) by a central stalk formed by the gamma and epsilon chains, while a peripheral stalk is formed by the delta, b and b' chains.

Its subcellular location is the plastid. It is found in the chloroplast thylakoid membrane. Functionally, f(1)F(0) ATP synthase produces ATP from ADP in the presence of a proton or sodium gradient. F-type ATPases consist of two structural domains, F(1) containing the extramembraneous catalytic core and F(0) containing the membrane proton channel, linked together by a central stalk and a peripheral stalk. During catalysis, ATP synthesis in the catalytic domain of F(1) is coupled via a rotary mechanism of the central stalk subunits to proton translocation. Its function is as follows. Component of the F(0) channel, it forms part of the peripheral stalk, linking F(1) to F(0). This chain is ATP synthase subunit b, chloroplastic, found in Hordeum vulgare (Barley).